Consider the following 95-residue polypeptide: uncharacterized protein (95 aa).

The disordered stretch occupies residues 65 to 95 (DANDYDTTTTEEEDSSTTTTTDNETNSDDDI).

This is an uncharacterized protein from Lymantria dispar multicapsid nuclear polyhedrosis virus (LdMNPV).